Reading from the N-terminus, the 92-residue chain is MKFEAVVRTELGKGASRRLRHAGKFPAVVYGGEEAAVAIVLNHDDIVNQMDKPEFYEGIVLVIDGKEVKVKPQDVQRHAFKPKVEHMDFIRI.

This sequence belongs to the bacterial ribosomal protein bL25 family. In terms of assembly, part of the 50S ribosomal subunit; part of the 5S rRNA/L5/L18/L25 subcomplex. Contacts the 5S rRNA. Binds to the 5S rRNA independently of L5 and L18.

Its function is as follows. This is one of the proteins that binds to the 5S RNA in the ribosome where it forms part of the central protuberance. The protein is Large ribosomal subunit protein bL25 of Vibrio parahaemolyticus serotype O3:K6 (strain RIMD 2210633).